The sequence spans 274 residues: MNYKPRTKVIAGNWKMYKCKDEALEFIQKVSLQVPDQTQVQTLIFPQLTLLDSLAQLQGTNLQVGAQNMFYESEGAFTGEVSPQNLLSLGVKHVLLGHSERRTFFGETDQTVNLKLLSALKHKLVPTVCVGESLLTKENNQTQVFLDQQLTNIFAGVPEEALQNIIIAYEPVWAIGTGKSATPQDANKVIEQIRDKVTALYSSQASCAMRIIYGGSVSVANIKTILEQPAIDGILAGKASLQTEDFLFFAQIASKQALASTKDIFQKNDCPFCC.

13–15 (NWK) lines the substrate pocket. The Electrophile role is filled by His-98. Catalysis depends on Glu-170, which acts as the Proton acceptor. Residues Gly-176 and Ser-216 each contribute to the substrate site.

Belongs to the triosephosphate isomerase family. As to quaternary structure, homodimer.

The protein resides in the cytoplasm. The catalysed reaction is D-glyceraldehyde 3-phosphate = dihydroxyacetone phosphate. The protein operates within carbohydrate biosynthesis; gluconeogenesis. It functions in the pathway carbohydrate degradation; glycolysis; D-glyceraldehyde 3-phosphate from glycerone phosphate: step 1/1. Functionally, involved in the gluconeogenesis. Catalyzes stereospecifically the conversion of dihydroxyacetone phosphate (DHAP) to D-glyceraldehyde-3-phosphate (G3P). This chain is Triosephosphate isomerase, found in Onion yellows phytoplasma (strain OY-M).